Consider the following 157-residue polypeptide: Crossover junction endodeoxyribonuclease RuvC (157 aa).

Active-site residues include aspartate 7, glutamate 67, and aspartate 140. Residues aspartate 7, glutamate 67, and aspartate 140 each coordinate Mg(2+).

This sequence belongs to the RuvC family. As to quaternary structure, homodimer which binds Holliday junction (HJ) DNA. The HJ becomes 2-fold symmetrical on binding to RuvC with unstacked arms; it has a different conformation from HJ DNA in complex with RuvA. In the full resolvosome a probable DNA-RuvA(4)-RuvB(12)-RuvC(2) complex forms which resolves the HJ. Mg(2+) serves as cofactor.

It localises to the cytoplasm. The enzyme catalyses Endonucleolytic cleavage at a junction such as a reciprocal single-stranded crossover between two homologous DNA duplexes (Holliday junction).. Its function is as follows. The RuvA-RuvB-RuvC complex processes Holliday junction (HJ) DNA during genetic recombination and DNA repair. Endonuclease that resolves HJ intermediates. Cleaves cruciform DNA by making single-stranded nicks across the HJ at symmetrical positions within the homologous arms, yielding a 5'-phosphate and a 3'-hydroxyl group; requires a central core of homology in the junction. The consensus cleavage sequence is 5'-(A/T)TT(C/G)-3'. Cleavage occurs on the 3'-side of the TT dinucleotide at the point of strand exchange. HJ branch migration catalyzed by RuvA-RuvB allows RuvC to scan DNA until it finds its consensus sequence, where it cleaves and resolves the cruciform DNA. This Rickettsia typhi (strain ATCC VR-144 / Wilmington) protein is Crossover junction endodeoxyribonuclease RuvC.